The primary structure comprises 396 residues: Probable sugar efflux transporter (396 aa).

Transmembrane regions (helical) follow at residues 15–35 (VVTL…PVGL), 50–70 (VGIM…PFML), 81–101 (LICL…AWNF), 103–123 (VLVI…SITA), 136–156 (AQAL…GLPI), 169–189 (TFFA…KLLP), 202–222 (LPLL…VVVV), 246–266 (FATV…LVFG), 275–295 (SLVS…LPAA), 301–321 (LAIL…GMQV), 333–353 (VAMA…ALVG), and 364–384 (AIGY…VLIF).

Belongs to the major facilitator superfamily. SotB (TC 2.A.1.2) family.

The protein localises to the cell inner membrane. Its function is as follows. Involved in the efflux of sugars. The physiological role may be the reduction of the intracellular concentration of toxic sugars or sugar metabolites. This Salmonella paratyphi A (strain ATCC 9150 / SARB42) protein is Probable sugar efflux transporter.